The chain runs to 127 residues: Fluoride-specific ion channel FluC (127 aa).

A run of 3 helical transmembrane segments spans residues 37–57 (TSFV…WLAL), 68–88 (LFLA…SLEV), and 102–122 (LYAG…LWMA). Na(+) is bound by residues glycine 76 and threonine 79.

The protein belongs to the fluoride channel Fluc/FEX (TC 1.A.43) family.

It localises to the cell inner membrane. It catalyses the reaction fluoride(in) = fluoride(out). Its activity is regulated as follows. Na(+) is not transported, but it plays an essential structural role and its presence is essential for fluoride channel function. In terms of biological role, fluoride-specific ion channel. Important for reducing fluoride concentration in the cell, thus reducing its toxicity. The polypeptide is Fluoride-specific ion channel FluC (Hyphomonas neptunium (strain ATCC 15444)).